The primary structure comprises 332 residues: Tryptophan--tRNA ligase (332 aa).

ATP contacts are provided by residues threonine 11–threonine 13 and glycine 19–asparagine 20. The short motif at serine 12–asparagine 20 is the 'HIGH' region element. Aspartate 140 contributes to the L-tryptophan binding site. ATP contacts are provided by residues glycine 152–aspartate 154, isoleucine 191, and lysine 200–serine 204. The 'KMSKS' region signature appears at lysine 200–serine 204.

It belongs to the class-I aminoacyl-tRNA synthetase family. Homodimer.

The protein resides in the cytoplasm. The catalysed reaction is tRNA(Trp) + L-tryptophan + ATP = L-tryptophyl-tRNA(Trp) + AMP + diphosphate + H(+). Functionally, catalyzes the attachment of tryptophan to tRNA(Trp). This is Tryptophan--tRNA ligase from Mycoplasmopsis pulmonis (strain UAB CTIP) (Mycoplasma pulmonis).